Reading from the N-terminus, the 202-residue chain is Small ribosomal subunit protein uS4 (202 aa).

The S4 RNA-binding domain occupies 94 to 157; that stretch reads SRLDSLVYRA…LEMPLIKNTL (64 aa).

Belongs to the universal ribosomal protein uS4 family. As to quaternary structure, part of the 30S ribosomal subunit. Contacts protein S5. The interaction surface between S4 and S5 is involved in control of translational fidelity.

In terms of biological role, one of the primary rRNA binding proteins, it binds directly to 16S rRNA where it nucleates assembly of the body of the 30S subunit. Its function is as follows. With S5 and S12 plays an important role in translational accuracy. This is Small ribosomal subunit protein uS4 from Ureaplasma urealyticum serovar 10 (strain ATCC 33699 / Western).